Here is a 310-residue protein sequence, read N- to C-terminus: ATP-dependent protease (310 aa).

An Integrase catalytic domain is found at 24-186 (RLNQCFFKFK…TPNQKEENYF (163 aa)).

In Lactococcus lactis subsp. lactis (Streptococcus lactis), this protein is ATP-dependent protease.